We begin with the raw amino-acid sequence, 124 residues long: MARIAGVDIPTQKRVVISLQYIYGIGQTTAQEVLKNANVSEDIRVKDLNDDQLSAIRGEVAKIVTEGDLRRESTLNIKRLMEIGSYRGIRHRKGLPVNGQNTRNNARTRKGKPKAVTGKKQAGK.

Residues 91–124 (HRKGLPVNGQNTRNNARTRKGKPKAVTGKKQAGK) form a disordered region.

This sequence belongs to the universal ribosomal protein uS13 family. Part of the 30S ribosomal subunit. Forms a loose heterodimer with protein S19. Forms two bridges to the 50S subunit in the 70S ribosome.

Its function is as follows. Located at the top of the head of the 30S subunit, it contacts several helices of the 16S rRNA. In the 70S ribosome it contacts the 23S rRNA (bridge B1a) and protein L5 of the 50S subunit (bridge B1b), connecting the 2 subunits; these bridges are implicated in subunit movement. Contacts the tRNAs in the A and P-sites. In Acholeplasma laidlawii (strain PG-8A), this protein is Small ribosomal subunit protein uS13.